The sequence spans 177 residues: MAGYQLWSPWTPLDESFQWLRHTTPTPSSKHPFKASPCFPHTPSDLEVQLCFQEVTLVLDSPFLESGVSPKLPCHTSELRTMNNKGLVRKPQPIRLSGVDSVFGRVITAQPPKWTGTFRVSDKSAFCKIISREHQWPIGLKEPQIQMTVTMCKQMLRSILLLYATYKKCTFALQHSK.

This is FANCD2 opposite strand protein (FANCD2OS) from Homo sapiens (Human).